A 567-amino-acid chain; its full sequence is MYQGHMQLVNEQQESRPLLSPSIDDFLCETKSEAIAKPVTSNTAVLTTGLDLLDLSEPVSQPQTKAKKSEPSSKSSSLKKKADGSDLISADAEQRAQALRGPETSSLDLDIQTQLEKWDDVKFHGDRTSKGHLMAERKSCSSRTGSKELLWSAEHRSQPELSTGKSALNSESASELELVAPAQARLTKEHRWGSALLSRNHSLEEEFERAKAAVESDTEFWDKMQAEWEEMARRNWISENQEAQNQVTVSASEKGYYFHTENPFKDWPGAFEEGLKRLKEGDLPVTILFMEAAILQDPGDAEAWQFLGITQAENENEQAAIVALQRCLELQPNNLKALMALAVSYTNTSHQQDACEALKNWIKQNPKYKYLVKNKKGSPGLTRRMSKSPVDSSVLEGVKELYLEAAHQNGDMIDPDLQTGLGVLFHLSGEFNRAIDAFNAALTVRPEDYSLWNRLGATLANGDRSEEAVEAYTRALEIQPGFIRSRYNLGISCINLGAYREAVSNFLTALSLQRKSRNQQQVPHPAISGNIWAALRIALSLMDQPELFQAANLGDLDVLLRAFNLDP.

The disordered stretch occupies residues 56–105 (SEPVSQPQTKAKKSEPSSKSSSLKKKADGSDLISADAEQRAQALRGPETS). Residue serine 146 is modified to Phosphoserine. Residues 150-169 (LWSAEHRSQPELSTGKSALN) are disordered. A phosphoserine mark is found at serine 194, serine 198, and serine 202. TPR repeat units follow at residues 267–300 (WPGA…DPGD), 301–334 (AEAW…QPNN), and 336–368 (KALM…NPKY). A phosphoserine mark is found at serine 386 and serine 388. TPR repeat units lie at residues 415 to 448 (PDLQ…RPED), 450 to 482 (SLWN…QPGF), and 484 to 516 (RSRY…QRKS).

This sequence belongs to the peroxisomal targeting signal receptor family. In terms of assembly, interacts with RAB8B. Forms an obligate 4:4 complex with HCN2. Interacts with HCN3. Interacts with HCN4 with a 4:4 HCN4:PEX5L stoichiometry; reduces the effects of cAMP on the voltage-dependence and rate of activation of HCN4.

The protein resides in the cytoplasm. It localises to the membrane. Functionally, accessory subunit of hyperpolarization-activated cyclic nucleotide-gated (HCN) channels, regulating their cell-surface expression and cyclic nucleotide dependence. The polypeptide is PEX5-related protein (Pex5l) (Mus musculus (Mouse)).